Reading from the N-terminus, the 149-residue chain is Myoglobin (149 aa).

Val2 bears the N-acetylvaline mark. The 142-residue stretch at 2 to 143 folds into the Globin domain; sequence VDWEKVNSVW…ICSDIEKEYK (142 aa). His89 serves as a coordination point for heme b.

The protein belongs to the globin family. Monomeric.

The protein localises to the cytoplasm. Its subcellular location is the sarcoplasm. The catalysed reaction is Fe(III)-heme b-[protein] + nitric oxide + H2O = Fe(II)-heme b-[protein] + nitrite + 2 H(+). It carries out the reaction H2O2 + AH2 = A + 2 H2O. In terms of biological role, monomeric heme protein which primary function is to store oxygen and facilitate its diffusion within muscle tissues. Reversibly binds oxygen through a pentacoordinated heme iron and enables its timely and efficient release as needed during periods of heightened demand. Depending on the oxidative conditions of tissues and cells, and in addition to its ability to bind oxygen, it also has a nitrite reductase activity whereby it regulates the production of bioactive nitric oxide. Under stress conditions, like hypoxia and anoxia, it also protects cells against reactive oxygen species thanks to its pseudoperoxidase activity. In Mustelus antarcticus (Gummy shark), this protein is Myoglobin (mb).